A 220-amino-acid polypeptide reads, in one-letter code: Metalloproteinase inhibitor 2 (220 aa).

Positions 1 to 26 (MGATARSLRLALGLLLLGTLPRGADA) are cleaved as a signal peptide. Cys-27 provides a ligand contact to Zn(2+). Involved in metalloproteinase-binding stretches follow at residues 27-30 (CSCS) and 95-96 (SA). 6 cysteine pairs are disulfide-bonded: Cys-27–Cys-98, Cys-29–Cys-127, Cys-39–Cys-152, Cys-154–Cys-201, Cys-159–Cys-164, and Cys-172–Cys-193. The NTR domain occupies 27–152 (CSCSPVHPQQ…SLNHRYQMGC (126 aa)).

This sequence belongs to the protease inhibitor I35 (TIMP) family. Interacts (via the C-terminal) with MMP2 (via the C-terminal PEX domain); the interaction inhibits the MMP2 activity. Post-translationally, the activity of TIMP2 is dependent on the presence of disulfide bonds. Predominantly expressed in the lung in alveolar macrophages and epithelial cells. Also found in brain, kidney, intestine, spleen and heart.

Its subcellular location is the secreted. In terms of biological role, complexes with metalloproteinases (such as collagenases) and irreversibly inactivates them by binding to their catalytic zinc cofactor. The protein is Metalloproteinase inhibitor 2 (TIMP2) of Cavia porcellus (Guinea pig).